The chain runs to 240 residues: Orotidine 5'-phosphate decarboxylase (240 aa).

Substrate contacts are provided by residues D15, K37, 64–73 (DLKYHDIPNT), T127, R188, Q197, G217, and R218. Residue K66 is the Proton donor of the active site.

Belongs to the OMP decarboxylase family. Type 1 subfamily. Homodimer.

It carries out the reaction orotidine 5'-phosphate + H(+) = UMP + CO2. It functions in the pathway pyrimidine metabolism; UMP biosynthesis via de novo pathway; UMP from orotate: step 2/2. Its function is as follows. Catalyzes the decarboxylation of orotidine 5'-monophosphate (OMP) to uridine 5'-monophosphate (UMP). This chain is Orotidine 5'-phosphate decarboxylase, found in Geobacter sp. (strain M21).